Reading from the N-terminus, the 475-residue chain is AAA-ATPase At1g43910 (475 aa).

Residues 11–28 form a helical membrane-spanning segment; the sequence is VSAVFSLYTSFSAITMLF. Position 85 is a phosphothreonine (threonine 85). Residue 246–253 coordinates ATP; that stretch reads GPPGTGKS. 2 disordered regions span residues 306–328 and 453–475; these read SRRR…PQKR and KGED…EAET. Over residues 457-467 the composition is skewed to acidic residues; the sequence is SSVEEEGEIED.

Belongs to the AAA ATPase family. BCS1 subfamily. Mg(2+) is required as a cofactor. In terms of tissue distribution, expressed in developing shoots.

It is found in the membrane. It carries out the reaction ATP + H2O = ADP + phosphate + H(+). This Arabidopsis thaliana (Mouse-ear cress) protein is AAA-ATPase At1g43910.